A 1813-amino-acid polypeptide reads, in one-letter code: Latent-transforming growth factor beta-binding protein 2 (1813 aa).

Positions methionine 1 to alanine 35 are cleaved as a signal peptide. The heparin-binding stretch occupies residues asparagine 94–valine 115. Residues alanine 103–alanine 152 form a disordered region. Over residues arginine 108–isoleucine 132 the composition is skewed to polar residues. Asparagine 175 carries N-linked (GlcNAc...) asparagine glycosylation. The region spanning isoleucine 181 to glutamate 213 is the EGF-like 1 domain. 3 disulfide bridges follow: cysteine 185/cysteine 195, cysteine 189/cysteine 201, and cysteine 203/cysteine 212. The tract at residues glutamate 220–glycine 305 is disordered. The interval alanine 226–serine 243 is heparin-binding. Residues leucine 257 to serine 266 are compositionally biased toward pro residues. Polar residues predominate over residues alanine 293–leucine 302. Residue asparagine 328 is glycosylated (N-linked (GlcNAc...) asparagine). Position 329-339 (leucine 329–valine 339) interacts with heparin. Residues arginine 381–histidine 413 form the EGF-like 2 domain. 3 cysteine pairs are disulfide-bonded: cysteine 385-cysteine 395, cysteine 389-cysteine 401, and cysteine 403-cysteine 412. An N-linked (GlcNAc...) asparagine glycan is attached at asparagine 406. The residue at position 491 (serine 491) is a Phosphoserine. The tract at residues valine 492–proline 524 is disordered. Residues glycine 536–isoleucine 588 enclose the TB 1 domain. Intrachain disulfides connect cysteine 538-cysteine 560, cysteine 547-cysteine 573, and cysteine 561-cysteine 576. Asparagine 603 carries an N-linked (GlcNAc...) asparagine glycan. The 41-residue stretch at aspartate 609–valine 649 folds into the EGF-like 3; calcium-binding domain. 7 cysteine pairs are disulfide-bonded: cysteine 613–cysteine 624, cysteine 619–cysteine 633, cysteine 635–cysteine 648, cysteine 661–cysteine 683, cysteine 670–cysteine 696, cysteine 684–cysteine 699, and cysteine 685–cysteine 711. The 53-residue stretch at glycine 659–cysteine 711 folds into the TB 2 domain. Disordered regions lie at residues lysine 730–arginine 761 and serine 787–glutamate 819. The region spanning aspartate 835–threonine 877 is the EGF-like 4 domain. Disulfide bonds link cysteine 839–cysteine 852, cysteine 847–cysteine 861, cysteine 863–cysteine 876, cysteine 882–cysteine 893, cysteine 887–cysteine 902, cysteine 904–cysteine 919, cysteine 925–cysteine 936, cysteine 931–cysteine 945, cysteine 947–cysteine 959, cysteine 965–cysteine 976, cysteine 971–cysteine 985, cysteine 988–cysteine 999, cysteine 1005–cysteine 1016, cysteine 1011–cysteine 1025, cysteine 1027–cysteine 1040, cysteine 1046–cysteine 1057, cysteine 1052–cysteine 1066, cysteine 1069–cysteine 1082, cysteine 1088–cysteine 1099, cysteine 1094–cysteine 1108, cysteine 1111–cysteine 1124, cysteine 1130–cysteine 1142, cysteine 1137–cysteine 1151, cysteine 1153–cysteine 1165, cysteine 1171–cysteine 1183, cysteine 1177–cysteine 1192, cysteine 1194–cysteine 1207, cysteine 1213–cysteine 1224, cysteine 1219–cysteine 1233, cysteine 1235–cysteine 1249, cysteine 1255–cysteine 1268, cysteine 1263–cysteine 1277, cysteine 1281–cysteine 1293, cysteine 1299–cysteine 1311, cysteine 1305–cysteine 1320, cysteine 1322–cysteine 1335, cysteine 1341–cysteine 1353, cysteine 1348–cysteine 1362, cysteine 1364–cysteine 1378, cysteine 1405–cysteine 1428, cysteine 1415–cysteine 1440, cysteine 1429–cysteine 1443, cysteine 1430–cysteine 1455, cysteine 1481–cysteine 1494, cysteine 1489–cysteine 1503, cysteine 1505–cysteine 1518, cysteine 1524–cysteine 1534, cysteine 1529–cysteine 1543, and cysteine 1545–cysteine 1558. An EGF-like 5; calcium-binding domain is found at aspartate 878–glutamine 920. Residues aspartate 921–glutamine 960 form the EGF-like 6; calcium-binding domain. Residues aspartate 961–valine 1000 enclose the EGF-like 7; calcium-binding domain. The region spanning aspartate 1001–arginine 1041 is the EGF-like 8; calcium-binding domain. The 42-residue stretch at aspartate 1042–glutamate 1083 folds into the EGF-like 9; calcium-binding domain. An EGF-like 10; calcium-binding domain is found at aspartate 1084–glutamate 1125. In terms of domain architecture, EGF-like 11; calcium-binding spans aspartate 1126–glutamate 1166. The N-linked (GlcNAc...) asparagine glycan is linked to asparagine 1161. The EGF-like 12; calcium-binding domain occupies aspartate 1167–glutamine 1208. In terms of domain architecture, EGF-like 13; calcium-binding spans aspartate 1209–leucine 1250. Positions aspartate 1251–isoleucine 1294 constitute an EGF-like 14; calcium-binding domain. Residues aspartate 1295 to valine 1336 enclose the EGF-like 15; calcium-binding domain. Asparagine 1301 carries N-linked (GlcNAc...) asparagine glycosylation. Residues aspartate 1337–arginine 1379 enclose the EGF-like 16; calcium-binding domain. The region spanning methionine 1403–cysteine 1455 is the TB 3 domain. A glycan (N-linked (GlcNAc...) asparagine) is linked at asparagine 1422. An EGF-like 17; calcium-binding domain is found at aspartate 1477–glutamine 1519. Positions aspartate 1520–valine 1559 constitute an EGF-like 18; calcium-binding domain. Asparagine 1560 carries N-linked (GlcNAc...) asparagine glycosylation. In terms of domain architecture, TB 4 spans aspartate 1576 to cysteine 1628. 4 disulfides stabilise this stretch: cysteine 1578/cysteine 1601, cysteine 1587/cysteine 1613, cysteine 1602/cysteine 1616, and cysteine 1603/cysteine 1628. Positions alanine 1631–glutamate 1813 are C-terminal domain. Residues tyrosine 1671–proline 1717 are disordered. One can recognise an EGF-like 19; calcium-binding domain in the interval glutamine 1725–valine 1765. Intrachain disulfides connect cysteine 1729/cysteine 1740, cysteine 1735/cysteine 1749, cysteine 1751/cysteine 1764, cysteine 1770/cysteine 1785, cysteine 1780/cysteine 1794, and cysteine 1796/cysteine 1809. The 45-residue stretch at aspartate 1766–alanine 1810 folds into the EGF-like 20; calcium-binding domain.

It belongs to the LTBP family. In terms of assembly, forms part of the large latent transforming growth factor beta precursor complex; removal is essential for activation of complex. Interacts with SDC4. Interacts (via C-terminal domain) with FBN1 (via N-terminal domain) in a Ca(+2)-dependent manner. Post-translationally, N-Glycosylated. Contains hydroxylated asparagine residues. In terms of tissue distribution, expressed in the anterior chamber of the eye.

It is found in the secreted. It localises to the extracellular space. The protein localises to the extracellular matrix. May play an integral structural role in elastic-fiber architectural organization and/or assembly. This is Latent-transforming growth factor beta-binding protein 2 (Ltbp2) from Mus musculus (Mouse).